A 150-amino-acid polypeptide reads, in one-letter code: Large ribosomal subunit protein bL9 (150 aa).

Belongs to the bacterial ribosomal protein bL9 family.

Its function is as follows. Binds to the 23S rRNA. The protein is Large ribosomal subunit protein bL9 of Arthrobacter sp. (strain FB24).